Consider the following 327-residue polypeptide: Zinc transport protein ZntB (327 aa).

Residues 1–273 (MEAIKGSDVN…ARRTYTMSLM (273 aa)) are Cytoplasmic-facing. A helical membrane pass occupies residues 274 to 294 (AMVFLPSTFLTGLFGVNLGGI). At 295-300 (PGGGWQ) the chain is on the periplasmic side. The chain crosses the membrane as a helical span at residues 301–321 (FGFSIFCILLVVLIGGVALWL). Over 322–327 (HRSKWL) the chain is Cytoplasmic.

Belongs to the CorA metal ion transporter (MIT) (TC 1.A.35) family.

The protein localises to the cell inner membrane. The enzyme catalyses Zn(2+)(out) + H(+)(out) = Zn(2+)(in) + H(+)(in). Its function is as follows. Zinc transporter. Acts as a Zn(2+):proton symporter, which likely mediates zinc ion uptake. This is Zinc transport protein ZntB from Escherichia coli O8 (strain IAI1).